A 73-amino-acid chain; its full sequence is Translation initiation factor IF-1 (73 aa).

An S1-like domain is found at 1-73 (MSKKKDVIEM…TRGRITYRYK (73 aa)).

It belongs to the IF-1 family. As to quaternary structure, component of the 30S ribosomal translation pre-initiation complex which assembles on the 30S ribosome in the order IF-2 and IF-3, IF-1 and N-formylmethionyl-tRNA(fMet); mRNA recruitment can occur at any time during PIC assembly.

Its subcellular location is the cytoplasm. Its function is as follows. One of the essential components for the initiation of protein synthesis. Stabilizes the binding of IF-2 and IF-3 on the 30S subunit to which N-formylmethionyl-tRNA(fMet) subsequently binds. Helps modulate mRNA selection, yielding the 30S pre-initiation complex (PIC). Upon addition of the 50S ribosomal subunit IF-1, IF-2 and IF-3 are released leaving the mature 70S translation initiation complex. The chain is Translation initiation factor IF-1 from Chloroflexus aurantiacus (strain ATCC 29366 / DSM 635 / J-10-fl).